Consider the following 436-residue polypeptide: Histidinol dehydrogenase (436 aa).

Residues T240, Q262, and H265 each coordinate substrate. Residues Q262 and H265 each coordinate Zn(2+). Catalysis depends on proton acceptor residues E331 and H332. The substrate site is built by H332, D365, E419, and H424. D365 is a binding site for Zn(2+). Residue H424 coordinates Zn(2+).

It belongs to the histidinol dehydrogenase family. Requires Zn(2+) as cofactor.

The enzyme catalyses L-histidinol + 2 NAD(+) + H2O = L-histidine + 2 NADH + 3 H(+). The protein operates within amino-acid biosynthesis; L-histidine biosynthesis; L-histidine from 5-phospho-alpha-D-ribose 1-diphosphate: step 9/9. Its function is as follows. Catalyzes the sequential NAD-dependent oxidations of L-histidinol to L-histidinaldehyde and then to L-histidine. The chain is Histidinol dehydrogenase from Leifsonia xyli subsp. xyli (strain CTCB07).